The following is a 180-amino-acid chain: uncharacterized protein (180 aa).

It belongs to the isochorismatase family.

This is an uncharacterized protein from Bacillus subtilis (strain 168).